The sequence spans 77 residues: UPF0349 protein lwe2340 (77 aa).

Belongs to the UPF0349 family.

This chain is UPF0349 protein lwe2340, found in Listeria welshimeri serovar 6b (strain ATCC 35897 / DSM 20650 / CCUG 15529 / CIP 8149 / NCTC 11857 / SLCC 5334 / V8).